The following is a 461-amino-acid chain: UPF0053 protein YhdT (461 aa).

A CNNM transmembrane domain is found at 1–202 (MDDIDSLILI…LKNGEINPSE (202 aa)). A run of 3 helical transmembrane segments spans residues 8–28 (ILIG…FAIV), 103–123 (VSFA…GELA), and 137–157 (LLIA…IWIL). 2 CBS domains span residues 221–280 (MIPR…MTEE) and 290–347 (YVRP…IRDE).

This sequence belongs to the UPF0053 family.

The protein localises to the cell membrane. The protein is UPF0053 protein YhdT (yhdT) of Bacillus subtilis (strain 168).